The sequence spans 185 residues: Ribosome-recycling factor (185 aa).

This sequence belongs to the RRF family.

It is found in the cytoplasm. Functionally, responsible for the release of ribosomes from messenger RNA at the termination of protein biosynthesis. May increase the efficiency of translation by recycling ribosomes from one round of translation to another. The protein is Ribosome-recycling factor of Clostridium acetobutylicum (strain ATCC 824 / DSM 792 / JCM 1419 / IAM 19013 / LMG 5710 / NBRC 13948 / NRRL B-527 / VKM B-1787 / 2291 / W).